Reading from the N-terminus, the 88-residue chain is Acylphosphatase (88 aa).

The region spanning 3–88 is the Acylphosphatase-like domain; the sequence is AARFIFTGVV…IPTTEAFVTG (86 aa). Catalysis depends on residues arginine 18 and asparagine 36.

It belongs to the acylphosphatase family.

The enzyme catalyses an acyl phosphate + H2O = a carboxylate + phosphate + H(+). The sequence is that of Acylphosphatase (acyP) from Xanthomonas campestris pv. campestris (strain 8004).